A 570-amino-acid chain; its full sequence is T-cell surface protein tactile (570 aa).

A signal peptide spans 1–21 (MEKKWTYCAVYSIIQMHLVRG). Residues 22–504 (IVEETFGAEE…TVISKPKDGM (483 aa)) lie on the Extracellular side of the membrane. One can recognise an Ig-like V-type 1 domain in the interval 38–125 (GSDVNLTCQT…YECSFTLYPE (88 aa)). N-linked (GlcNAc...) asparagine glycans are attached at residues asparagine 42, asparagine 107, asparagine 148, asparagine 156, asparagine 166, asparagine 184, asparagine 261, asparagine 284, asparagine 334, asparagine 352, asparagine 374, and asparagine 431. Cysteine 45 and cysteine 118 are disulfide-bonded. The 67-residue stretch at 156–222 (NGTLEIPCFQ…YRLYLSPVQI (67 aa)) folds into the Ig-like V-type 2 domain. Cysteine 163 and cysteine 231 form a disulfide bridge. The Ig-like C2-type domain occupies 253-359 (PEIPMIVENN…VWNSSSEKIT (107 aa)). The cysteines at positions 274 and 339 are disulfide-linked. Residues 373-403 (LNATESTLGTRPSLANSISPTGYRTPSSTAH) form a disordered region. The segment at 441 to 486 (AKHSAPWMPSETNSSPSSGAGSTLPGDIFTSTTRASSEVPTTANVS) is disordered. 2 stretches are compositionally biased toward polar residues: residues 450–461 (SETNSSPSSGAG) and 469–486 (FTST…ANVS). N-linked (GlcNAc...) asparagine glycosylation is present at asparagine 484. A helical transmembrane segment spans residues 505–525 (SWPVIVAALLLSCFVLFGLGV). At 526-570 (RKWCQYQKEIMQRPPPFKPPPPPIKYTCIQESIGSDLPCHELETL) the chain is on the cytoplasmic side.

Homodimer; disulfide-linked. Interacts with PVR.

The protein localises to the membrane. Functionally, may be involved in adhesive interactions of activated T and NK cells during the late phase of the immune response. Promotes NK cell-target adhesion by interacting with PVR present on target cells. May function at a time after T and NK cells have penetrated the endothelium using integrins and selectins, when they are actively engaging diseased cells and moving within areas of inflammation. The protein is T-cell surface protein tactile (CD96) of Bos taurus (Bovine).